Reading from the N-terminus, the 404-residue chain is S-adenosylmethionine synthase (404 aa).

Position 18 (His-18) interacts with ATP. Residue Asp-20 participates in Mg(2+) binding. Glu-46 provides a ligand contact to K(+). L-methionine is bound by residues Glu-59 and Gln-102. Residues 102 to 112 are flexible loop; that stretch reads QSPEIAQGVDH. ATP-binding positions include 178–180, 249–250, Asp-258, 264–265, Ala-281, and Lys-285; these read DGK, KF, and RK. Asp-258 lines the L-methionine pocket. Lys-289 provides a ligand contact to L-methionine.

This sequence belongs to the AdoMet synthase family. As to quaternary structure, homotetramer; dimer of dimers. It depends on Mg(2+) as a cofactor. K(+) serves as cofactor.

The protein resides in the cytoplasm. It carries out the reaction L-methionine + ATP + H2O = S-adenosyl-L-methionine + phosphate + diphosphate. The protein operates within amino-acid biosynthesis; S-adenosyl-L-methionine biosynthesis; S-adenosyl-L-methionine from L-methionine: step 1/1. In terms of biological role, catalyzes the formation of S-adenosylmethionine (AdoMet) from methionine and ATP. The overall synthetic reaction is composed of two sequential steps, AdoMet formation and the subsequent tripolyphosphate hydrolysis which occurs prior to release of AdoMet from the enzyme. In Rhodococcus jostii (strain RHA1), this protein is S-adenosylmethionine synthase.